Reading from the N-terminus, the 1180-residue chain is Phosphatidylinositol 4-kinase (1180 aa).

Residues 1–206 (MNKISDTIII…SVYLHSPSTS (206 aa)) enclose the PIK helical domain. Disordered regions lie at residues 15–84 (NEDE…KHKE), 257–327 (ENDH…ENDN), 355–391 (TSPI…NNIN), 768–799 (TISN…IPHS), and 832–894 (AISP…SPFG). A compositionally biased stretch (low complexity) spans 38–74 (NNNNNNILTNVNNNKNNTITSSGGSDSSSSSSNNNNN). Residues 75–84 (KIKKSKKHKE) are compositionally biased toward basic residues. The segment covering 257 to 270 (ENDHHIENDPKKDI) has biased composition (basic and acidic residues). Composition is skewed to low complexity over residues 271–325 (NSNN…SGEN), 364–391 (NNNN…NNIN), 768–793 (TISN…PTLP), and 835–879 (PPSQ…SPTN). The PI3K/PI4K catalytic domain maps to 895 to 1164 (ESWQEKIERY…LISYSIDHFK (270 aa)). Residues 901 to 907 (IERYKKI) form a G-loop region. The tract at residues 1030–1038 (QIKDRHNGN) is catalytic loop. The interval 1049–1073 (HIDFGFILSNSPGNISFESAPFKLT) is activation loop.

This sequence belongs to the PI3/PI4-kinase family. Type III PI4K subfamily.

It catalyses the reaction a 1,2-diacyl-sn-glycero-3-phospho-(1D-myo-inositol) + ATP = a 1,2-diacyl-sn-glycero-3-phospho-(1D-myo-inositol 4-phosphate) + ADP + H(+). Acts on phosphatidylinositol (PtdIns) in the first committed step in the production of the second messenger inositol-1,4,5,-trisphosphate. The sequence is that of Phosphatidylinositol 4-kinase (pikD) from Dictyostelium discoideum (Social amoeba).